The chain runs to 195 residues: HTH-type transcriptional regulator BetI (195 aa).

The region spanning 8–68 (PIRRQQLIEA…ATMRYLISHL (61 aa)) is the HTH tetR-type domain. The H-T-H motif DNA-binding region spans 31–50 (SIVQIARRAGVSNGIISHYF).

The protein operates within amine and polyamine biosynthesis; betaine biosynthesis via choline pathway [regulation]. Functionally, repressor involved in the biosynthesis of the osmoprotectant glycine betaine. It represses transcription of the choline transporter BetT and the genes of BetAB involved in the synthesis of glycine betaine. This Pectobacterium carotovorum subsp. carotovorum (strain PC1) protein is HTH-type transcriptional regulator BetI.